The sequence spans 363 residues: MEPSSETGMDPPLSQETFEDLWSLLPDPLQTVTCRLDNLSEFPDYPLAADMTVLQEGLMGNAVPTVTSCAVPSTDDYAGKYGLQLDFQQNGTAKSVTCTYSPELNKLFCQLAKTCPLLVRVESPPPRGSILRATAVYKKSEHVAEVVKRCPHHERSVEPGEDAAPPSHLMRVEGNLQAYYMEDVNSGRHSVCVPYEGPQVGTECTTVLYNYMCNSSCMGGMNRRPILTIITLETPQGLLLGRRCFEVRVCACPGRDRRTEEDNYTKKRGLKPSGKRELAHPPSSEPPLPKKRLVVVDDDEEIFTLRIKGRSRYEMIKKLNDALELQESLDQQKVTIKCRKCRDEIKPKKGKKLLVKDEQPDSE.

The tract at residues 1–29 is transcription activation (acidic); sequence MEPSSETGMDPPLSQETFEDLWSLLPDPL. The DNA-binding element occupies 76 to 267; it reads DYAGKYGLQL…RTEEDNYTKK (192 aa). Zn(2+) is bound by residues C150, H153, C213, and C217. The interaction with DNA stretch occupies residues 248–255; that stretch reads RVCACPGR. The segment at 257-290 is disordered; that stretch reads RRTEEDNYTKKRGLKPSGKRELAHPPSSEPPLPK. A Bipartite nuclear localization signal motif is present at residues 275 to 292; it reads KRELAHPPSSEPPLPKKR. Residues 300–331 form an oligomerization region; sequence EEIFTLRIKGRSRYEMIKKLNDALELQESLDQ. Residues 314 to 325 carry the Nuclear export signal motif; that stretch reads EMIKKLNDALEL. A basic (repression of DNA-binding) region spans residues 344–356; that stretch reads EIKPKKGKKLLVK.

Belongs to the p53 family. As to quaternary structure, binds DNA as a homotetramer. Zn(2+) is required as a cofactor. In terms of tissue distribution, ubiquitous.

The protein resides in the cytoplasm. It is found in the nucleus. In terms of biological role, multifunctional transcription factor that induces cell cycle arrest, DNA repair or apoptosis upon binding to its target DNA sequence. Acts as a tumor suppressor in many tumor types; induces growth arrest or apoptosis depending on the physiological circumstances and cell type. Negatively regulates cell division by controlling expression of a set of genes required for this process. One of the activated genes is an inhibitor of cyclin-dependent kinases. Apoptosis induction seems to be mediated either by stimulation of BAX and FAS antigen expression, or by repression of Bcl-2 expression. The protein is Cellular tumor antigen p53 (tp53) of Xenopus laevis (African clawed frog).